The primary structure comprises 408 residues: Histidine--tRNA ligase (408 aa).

Belongs to the class-II aminoacyl-tRNA synthetase family.

It is found in the cytoplasm. The enzyme catalyses tRNA(His) + L-histidine + ATP = L-histidyl-tRNA(His) + AMP + diphosphate + H(+). The chain is Histidine--tRNA ligase from Methanospirillum hungatei JF-1 (strain ATCC 27890 / DSM 864 / NBRC 100397 / JF-1).